The primary structure comprises 132 residues: MSTTHNVPQGDLVLRTLAMPADTNANGDIFGGWLMSQMDIGGAILAKEIAHGRVVTVRVEGMTFLRPVAVGDVVCCYARCVQKGTTSVSINIEVWVKKVASEPIGQRYKATEALFKYVAVDPEGKPRALPVE.

Positions 8-123 (PQGDLVLRTL…LFKYVAVDPE (116 aa)) constitute a HotDog ACOT-type domain.

Belongs to the acyl coenzyme A hydrolase family.

Catalyzes the hydrolysis of the thioester bond in palmitoyl-CoA and malonyl-CoA. The polypeptide is Acyl-CoA thioester hydrolase YciA (yciA) (Escherichia coli O6:H1 (strain CFT073 / ATCC 700928 / UPEC)).